The sequence spans 104 residues: Large ribosomal subunit protein uL24 (104 aa).

Belongs to the universal ribosomal protein uL24 family. In terms of assembly, part of the 50S ribosomal subunit.

Functionally, one of two assembly initiator proteins, it binds directly to the 5'-end of the 23S rRNA, where it nucleates assembly of the 50S subunit. Its function is as follows. One of the proteins that surrounds the polypeptide exit tunnel on the outside of the subunit. The chain is Large ribosomal subunit protein uL24 from Pseudomonas fluorescens (strain ATCC BAA-477 / NRRL B-23932 / Pf-5).